Consider the following 545-residue polypeptide: Glucose-6-phosphate isomerase (545 aa).

The active-site Proton donor is the Glu-351. Residues His-382 and Lys-510 contribute to the active site.

Belongs to the GPI family.

Its subcellular location is the cytoplasm. The enzyme catalyses alpha-D-glucose 6-phosphate = beta-D-fructose 6-phosphate. Its pathway is carbohydrate biosynthesis; gluconeogenesis. The protein operates within carbohydrate degradation; glycolysis; D-glyceraldehyde 3-phosphate and glycerone phosphate from D-glucose: step 2/4. Its function is as follows. Catalyzes the reversible isomerization of glucose-6-phosphate to fructose-6-phosphate. This is Glucose-6-phosphate isomerase from Helicobacter pylori (strain HPAG1).